The chain runs to 78 residues: Cytochrome c-551 (78 aa).

Heme c contacts are provided by C14, C17, H18, and M55.

In terms of processing, binds 1 heme c group covalently per subunit.

This Halorhodospira halophila (Ectothiorhodospira halophila) protein is Cytochrome c-551.